Consider the following 488-residue polypeptide: Fumarate hydratase, mitochondrial (488 aa).

The transit peptide at 1–24 (MLRFTNCSCKTFVKSSYKLNIRRM) directs the protein to the mitochondrion. Substrate is bound by residues 124 to 126 (SGT), 154 to 157 (HPNN), 164 to 166 (SSN), and threonine 212. Residue histidine 213 is the Proton donor/acceptor of the active site. Residue serine 343 is part of the active site. Residues serine 344 and 349–351 (KVN) each bind substrate. The residue at position 428 (threonine 428) is a Phosphothreonine.

It belongs to the class-II fumarase/aspartase family. Fumarase subfamily. Homotetramer.

The protein resides in the mitochondrion matrix. The protein localises to the cytoplasm. Its subcellular location is the nucleus. The enzyme catalyses (S)-malate = fumarate + H2O. The protein operates within carbohydrate metabolism; tricarboxylic acid cycle; (S)-malate from fumarate: step 1/1. Functionally, catalyzes the reversible stereospecific interconversion of fumarate to L-malate. In mitochondrion, catalyzes the hydration of fumarate to L-malate in the tricarboxylic acid (TCA) cycle to facilitate a transition step in the production of energy in the form of NADH. In cytoplasm and nucleus, involved in DNA repair in response to DNA damage: following DNA double-strand breaks (DSBs), translocates from the cytosol to the nucleus and promotes DNA repair by catalyzing the dehydration of L-malate to fumarate. The protein is Fumarate hydratase, mitochondrial of Saccharomyces cerevisiae (strain ATCC 204508 / S288c) (Baker's yeast).